The primary structure comprises 536 residues: Inactive phospholipase D5 (536 aa).

The Cytoplasmic segment spans residues 1 to 68 (MEIRQHEWLS…DKLEHSQQKC (68 aa)). Residues 69-89 (IVIFALVCCFAVLVALIFSAV) traverse the membrane as a helical segment. The Extracellular segment spans residues 90 to 536 (DIMGEDEDGL…NATGREPLSV (447 aa)). Asn-121 is a glycosylation site (N-linked (GlcNAc...) asparagine). The region spanning 215–242 (NKGRLQSSFWIVDKQHVYIGSAGLDWRS) is the PLD phosphodiesterase 1 domain. Residue Asn-302 is glycosylated (N-linked (GlcNAc...) asparagine). The PLD phosphodiesterase 2 domain maps to 434–460 (FPKLNRNKYMVTDGAAYIGNFDWVGND). Positions 503 to 536 (QPTKQPNCSSLSKLKSPSKQPAMANATGREPLSV) are disordered. The segment covering 511–521 (SSLSKLKSPSK) has biased composition (low complexity).

It belongs to the phospholipase D family.

The protein localises to the membrane. This is Inactive phospholipase D5 (Pld5) from Mus musculus (Mouse).